A 336-amino-acid chain; its full sequence is Biotin synthase (336 aa).

A Radical SAM core domain is found at 54–281; sequence NAIQLSTLLS…KAMVRLSAGR (228 aa). [4Fe-4S] cluster-binding residues include C69, C73, and C76. The [2Fe-2S] cluster site is built by C113, C144, C204, and R276.

Belongs to the radical SAM superfamily. Biotin synthase family. In terms of assembly, homodimer. [4Fe-4S] cluster is required as a cofactor. Requires [2Fe-2S] cluster as cofactor.

The enzyme catalyses (4R,5S)-dethiobiotin + (sulfur carrier)-SH + 2 reduced [2Fe-2S]-[ferredoxin] + 2 S-adenosyl-L-methionine = (sulfur carrier)-H + biotin + 2 5'-deoxyadenosine + 2 L-methionine + 2 oxidized [2Fe-2S]-[ferredoxin]. It participates in cofactor biosynthesis; biotin biosynthesis; biotin from 7,8-diaminononanoate: step 2/2. Catalyzes the conversion of dethiobiotin (DTB) to biotin by the insertion of a sulfur atom into dethiobiotin via a radical-based mechanism. This Burkholderia thailandensis (strain ATCC 700388 / DSM 13276 / CCUG 48851 / CIP 106301 / E264) protein is Biotin synthase.